Reading from the N-terminus, the 235-residue chain is Phosphoribosylaminoimidazole-succinocarboxamide synthase (235 aa).

It belongs to the SAICAR synthetase family.

The enzyme catalyses 5-amino-1-(5-phospho-D-ribosyl)imidazole-4-carboxylate + L-aspartate + ATP = (2S)-2-[5-amino-1-(5-phospho-beta-D-ribosyl)imidazole-4-carboxamido]succinate + ADP + phosphate + 2 H(+). The protein operates within purine metabolism; IMP biosynthesis via de novo pathway; 5-amino-1-(5-phospho-D-ribosyl)imidazole-4-carboxamide from 5-amino-1-(5-phospho-D-ribosyl)imidazole-4-carboxylate: step 1/2. In Chlorobium chlorochromatii (strain CaD3), this protein is Phosphoribosylaminoimidazole-succinocarboxamide synthase.